A 114-amino-acid polypeptide reads, in one-letter code: Fumarate reductase subunit D (114 aa).

Helical transmembrane passes span 24–44, 50–70, and 92–112; these read VSAIFLPVVILIIGLLLPFGL, LITFAYSWIGKLVILVLTIFP, and GGFIFYGLATIYTVWVLFAVI.

It belongs to the FrdD family. As to quaternary structure, part of an enzyme complex containing four subunits: a flavoprotein (FrdA), an iron-sulfur protein (FrdB), and two hydrophobic anchor proteins (FrdC and FrdD).

The protein resides in the cell inner membrane. Anchors the catalytic components of the fumarate reductase complex to the cell membrane, binds quinones. The protein is Fumarate reductase subunit D of Haemophilus influenzae (strain 86-028NP).